A 421-amino-acid polypeptide reads, in one-letter code: 2',3'-cyclic-nucleotide 3'-phosphodiesterase (421 aa).

Phosphoserine occurs at positions 6 and 9. Phosphotyrosine is present on Tyr110. A Phosphoserine modification is found at Ser170. The active-site Proton acceptor is the His251. Thr253 serves as a coordination point for substrate. Residue His330 is the Proton donor of the active site. Substrate is bound at residue Thr332. Position 359 is a phosphoserine (Ser359). Cysteine methyl ester is present on Cys418. A lipid anchor (S-farnesyl cysteine) is attached at Cys418. Residues 419-421 (TII) constitute a propeptide, removed in mature form.

Belongs to the 2H phosphoesterase superfamily. CNPase family. In terms of assembly, exists as monomers and homodimers.

The protein resides in the membrane. Its subcellular location is the melanosome. The catalysed reaction is a nucleoside 2',3'-cyclic phosphate + H2O = a nucleoside 2'-phosphate + H(+). Functionally, catalyzes the formation of 2'-nucleotide products from 2',3'-cyclic substrates. May participate in RNA metabolism in the myelinating cell, CNP is the third most abundant protein in central nervous system myelin. This chain is 2',3'-cyclic-nucleotide 3'-phosphodiesterase, found in Homo sapiens (Human).